Here is a 348-residue protein sequence, read N- to C-terminus: Rhodopsin (348 aa).

Met1 carries the post-translational modification N-acetylmethionine. Over 1-36 (MNGTEGLNFYVPFSNKTGVVRSPFEYPQYYLAEPWQ) the chain is Extracellular. 2 N-linked (GlcNAc...) asparagine glycosylation sites follow: Asn2 and Asn15. The chain crosses the membrane as a helical span at residues 37–61 (FSVLAAYMFLLIVLGFPINFLTLYV). Over 62-73 (TVQHKKLRTPLN) the chain is Cytoplasmic. The helical transmembrane segment at 74 to 96 (YIPLNLAVANLFMVFGGFTTTLY) threads the bilayer. The Extracellular portion of the chain corresponds to 97–110 (TSLHAYFVFGPTGC). Cys110 and Cys187 are joined by a disulfide. The helical transmembrane segment at 111–133 (NLEGFFATLGGEIALWSLVVLAI) threads the bilayer. A 'Ionic lock' involved in activated form stabilization motif is present at residues 134-136 (ERY). Over 134 to 152 (ERYVVVCKPMSNFRFGENH) the chain is Cytoplasmic. The helical transmembrane segment at 153–173 (AIMGLALTWVMAMACAAPPLV) threads the bilayer. The Extracellular segment spans residues 174–202 (GWSRYIPEGMQCSCGIDYYTSRQEVNNES). Glu201 serves as a coordination point for Zn(2+). A helical membrane pass occupies residues 203-224 (FVIYMFVVHFTIPLVIIFFCYG). The Cytoplasmic segment spans residues 225 to 252 (QLVFTVKEAAAQQQESATTQKAEKEVTR). Residues 253-274 (MVIIMVVAFLICWVPYASVAFY) traverse the membrane as a helical segment. Residues 275–286 (IFTHQGSDFGPI) lie on the Extracellular side of the membrane. Position 279 (Gln279) interacts with Zn(2+). A helical transmembrane segment spans residues 287-308 (FMTIPSFFAKSSSIYNPVIYIM). The residue at position 296 (Lys296) is an N6-(retinylidene)lysine. The Cytoplasmic portion of the chain corresponds to 309 to 348 (MNKQLRNCMLTTLCCGRNPLGDDEASTTASKTETSQVAPA). 2 S-palmitoyl cysteine lipidation sites follow: Cys322 and Cys323. Positions 330-348 (DDEASTTASKTETSQVAPA) are interaction with SAG. At Ser334 the chain carries Phosphoserine. A phosphothreonine mark is found at Thr335 and Thr336. The residue at position 338 (Ser338) is a Phosphoserine. Phosphothreonine occurs at positions 340 and 342. Phosphoserine is present on Ser343.

It belongs to the G-protein coupled receptor 1 family. Opsin subfamily. Homodimer. May form a complex composed of RHO, GRK1 and RCVRN in a Ca(2+)-dependent manner; RCVRN prevents the interaction between GRK1 and RHO. Interacts with GRK1. Interacts (phosphorylated form) with SAG. Interacts with GNAT1. Interacts with GNAT3. SAG and G-proteins compete for a common binding site. Interacts with PRCD; the interaction promotes PRCD stability. Forms a complex with ASAP1 and ARF4. Forms a complex with ASAP1, RAB11A, Rabin8/RAB3IP, ARF4 and RAB11FIP3; the complex regulates Golgi-to-cilia rhodopsin/RHO transport in photoreceptors. Phosphorylated on some or all of the serine and threonine residues present in the C-terminal region. Post-translationally, contains one covalently linked retinal chromophore. Upon light absorption, the covalently bound 11-cis-retinal is converted to all-trans-retinal. After hydrolysis of the Schiff base and release of the covalently bound all-trans-retinal, active rhodopsin is regenerated by binding of a fresh molecule of 11-cis-retinal.

The protein resides in the membrane. It is found in the cell projection. Its subcellular location is the cilium. It localises to the photoreceptor outer segment. Functionally, photoreceptor required for image-forming vision at low light intensity. Required for photoreceptor cell viability after birth. Light-induced isomerization of 11-cis to all-trans retinal triggers a conformational change that activates signaling via G-proteins. Subsequent receptor phosphorylation mediates displacement of the bound G-protein alpha subunit by the arrestin SAG and terminates signaling. The protein is Rhodopsin (RHO) of Globicephala melas (Long-finned pilot whale).